A 387-amino-acid polypeptide reads, in one-letter code: Phosphoglycerate kinase (387 aa).

Substrate is bound by residues 21–23 (DLN), Arg36, 59–62 (HLGR), Arg113, and Arg146. Residues Lys197, Glu314, and 340–343 (GGDT) each bind ATP.

Belongs to the phosphoglycerate kinase family. Monomer.

The protein resides in the cytoplasm. It carries out the reaction (2R)-3-phosphoglycerate + ATP = (2R)-3-phospho-glyceroyl phosphate + ADP. It functions in the pathway carbohydrate degradation; glycolysis; pyruvate from D-glyceraldehyde 3-phosphate: step 2/5. The chain is Phosphoglycerate kinase from Pseudomonas syringae pv. syringae (strain B728a).